Reading from the N-terminus, the 186-residue chain is Der GTPase-activating protein YihI (186 aa).

The tract at residues 39-77 (LDAKAREDKKKRKHKGLASGSRHSAVEEKANKLQNEIKD) is disordered. The span at 62–77 (SAVEEKANKLQNEIKD) shows a compositional bias: basic and acidic residues.

The protein belongs to the YihI family. As to quaternary structure, interacts with Der.

In terms of biological role, a GTPase-activating protein (GAP) that modifies Der/EngA GTPase function. May play a role in ribosome biogenesis. The sequence is that of Der GTPase-activating protein YihI from Haemophilus influenzae (strain 86-028NP).